The sequence spans 381 residues: Pre-mRNA-splicing factor cwf28 (381 aa).

The tract at residues 1–21 (MKRKAVLEAFSDSEDEDEKKL) is disordered. Phosphoserine occurs at positions 11 and 13. A coiled-coil region spans residues 104–157 (AADNEIVDWKANNSNEKAQNKIATNKESTDILPEEVQLVLNDLNDDVKSANSAN). The segment at 262–381 (LNSQNEHTEV…DRSYRSTRTL (120 aa)) is disordered. Polar residues predominate over residues 274–285 (KSNSIDNLTPSS). Phosphoserine is present on residues Ser-275 and Ser-277. Basic and acidic residues-rich tracts occupy residues 287–297 (LFRKRSRDNNL), 306–332 (KHLD…EYHS), and 362–375 (SDRY…DRSY).

Belongs to the SPP2 family. Belongs to the 40S cdc5-associated complex (or cwf complex), a spliceosome sub-complex reminiscent of a late-stage spliceosome composed of the U2, U5 and U6 snRNAs and at least brr2, cdc5, cwf2/prp3, cwf3/syf1, cwf4/syf3, cwf5/ecm2, spp42/cwf6, cwf7/spf27, cwf8, cwf9, cwf10, cwf11, cwf12, prp45/cwf13, cwf14, cwf15, cwf16, cwf17, cwf18, cwf19, cwf20, cwf21, cwf22, cwf23, cwf24, cwf25, cwf26, cyp7/cwf27, cwf28, cwf29/ist3, lea1, msl1, prp5/cwf1, prp10, prp12/sap130, prp17, prp22, sap61, sap62, sap114, sap145, slu7, smb1, smd1, smd3, smf1, smg1 and syf2.

The protein localises to the nucleus. Its function is as follows. Involved in spliceosome maturation and the first step of pre-mRNA splicing. This is Pre-mRNA-splicing factor cwf28 (cwf28) from Schizosaccharomyces pombe (strain 972 / ATCC 24843) (Fission yeast).